Consider the following 362-residue polypeptide: 3-dehydroquinate synthase (362 aa).

NAD(+)-binding positions include 71–76, 105–109, 129–130, K142, K151, and 169–172; these read DGEQYK, GVVGD, TT, and CLKT. Zn(2+)-binding residues include E184, H247, and H264.

Belongs to the sugar phosphate cyclases superfamily. Dehydroquinate synthase family. It depends on NAD(+) as a cofactor. Co(2+) serves as cofactor. Requires Zn(2+) as cofactor.

It is found in the cytoplasm. The enzyme catalyses 7-phospho-2-dehydro-3-deoxy-D-arabino-heptonate = 3-dehydroquinate + phosphate. The protein operates within metabolic intermediate biosynthesis; chorismate biosynthesis; chorismate from D-erythrose 4-phosphate and phosphoenolpyruvate: step 2/7. Its function is as follows. Catalyzes the conversion of 3-deoxy-D-arabino-heptulosonate 7-phosphate (DAHP) to dehydroquinate (DHQ). This is 3-dehydroquinate synthase from Escherichia coli O157:H7.